Consider the following 110-residue polypeptide: UPF0122 protein spr1167 (110 aa).

This sequence belongs to the UPF0122 family.

In terms of biological role, might take part in the signal recognition particle (SRP) pathway. This is inferred from the conservation of its genetic proximity to ftsY/ffh. May be a regulatory protein. The protein is UPF0122 protein spr1167 of Streptococcus pneumoniae (strain ATCC BAA-255 / R6).